Reading from the N-terminus, the 298-residue chain is Tyrosine recombinase XerC (298 aa).

The Core-binding (CB) domain occupies 2 to 88 (TDLHTDVERY…ALRSFFDWLV (87 aa)). A Tyr recombinase domain is found at 109–288 (HLPKNIDVDD…DFQHLASVYD (180 aa)). Residues R148, K172, H240, R243, and H266 contribute to the active site. Y275 functions as the O-(3'-phospho-DNA)-tyrosine intermediate in the catalytic mechanism.

The protein belongs to the 'phage' integrase family. XerC subfamily. In terms of assembly, forms a cyclic heterotetrameric complex composed of two molecules of XerC and two molecules of XerD, in which XerC interacts with XerD via its C-terminal region, XerD interacts with XerC via its C-terminal region and so on.

It is found in the cytoplasm. Its activity is regulated as follows. FtsK may regulate the catalytic switch between XerC and XerD in the heterotetrameric complex during the two steps of the recombination process. In terms of biological role, site-specific tyrosine recombinase, which acts by catalyzing the cutting and rejoining of the recombining DNA molecules. Binds cooperatively to specific DNA consensus sequences that are separated from XerD binding sites by a short central region, forming the heterotetrameric XerC-XerD complex that recombines DNA substrates. The complex is essential to convert dimers of the bacterial chromosome into monomers to permit their segregation at cell division. It also contributes to the segregational stability of plasmids. In the complex XerC specifically exchanges the top DNA strands. The sequence is that of Tyrosine recombinase XerC from Escherichia coli O6:K15:H31 (strain 536 / UPEC).